The primary structure comprises 859 residues: Sulfate permease 1 (859 aa).

Residues asparagine 51 and asparagine 93 are each glycosylated (N-linked (GlcNAc...) asparagine). Transmembrane regions (helical) follow at residues 94–114, 116–136, 148–168, 173–193, 206–226, 234–254, 292–312, and 332–352; these read LTAKSAGSYLVSLFPIIKWFP, YNFTWGYADLVAGITVGCVLV, LSPEYGLYSSFIGAFIYSLFA, VCIGPVAVMSLQTAKVIAEVL, PIIATTLCLLCGIVATGLGIL, LISLNAVAGFMTGSAFNIIWG, FGLIPLVILYVWKWWCGTFGI, and FYFYAQAMRNAVVIVVFTAIS. Residues asparagine 358 and asparagine 391 are each glycosylated (N-linked (GlcNAc...) asparagine). 4 helical membrane passes run 395–415, 428–448, 468–488, and 525–545; these read EIPASIIVLVLEHIAISKSFG, LIAIGVTNLIGTFFHSYPATG, VFTGGCVLLALYCLTDAFFFI, and FIVTVFITVFSSIENGIYFAM. Residues asparagine 630, asparagine 653, and asparagine 718 are each glycosylated (N-linked (GlcNAc...) asparagine). The 179-residue stretch at 630–808 folds into the STAS domain; it reads NTTVRPPPPG…SIIAGHSSFH (179 aa).

It belongs to the SLC26A/SulP transporter (TC 2.A.53) family.

The protein resides in the membrane. In terms of biological role, high affinity uptake of sulfate into the cell. This Saccharomyces cerevisiae (strain ATCC 204508 / S288c) (Baker's yeast) protein is Sulfate permease 1 (SUL1).